The primary structure comprises 148 residues: UPF0178 protein lpg0089 (148 aa).

The protein belongs to the UPF0178 family.

This is UPF0178 protein lpg0089 from Legionella pneumophila subsp. pneumophila (strain Philadelphia 1 / ATCC 33152 / DSM 7513).